Consider the following 191-residue polypeptide: Dephospho-CoA kinase (191 aa).

Positions 3 to 191 (AIGITGSYAS…KLIKDLECRV (189 aa)) constitute a DPCK domain. 11-16 (ASGKTF) serves as a coordination point for ATP.

This sequence belongs to the CoaE family.

The protein localises to the cytoplasm. The enzyme catalyses 3'-dephospho-CoA + ATP = ADP + CoA + H(+). The protein operates within cofactor biosynthesis; coenzyme A biosynthesis; CoA from (R)-pantothenate: step 5/5. Functionally, catalyzes the phosphorylation of the 3'-hydroxyl group of dephosphocoenzyme A to form coenzyme A. This chain is Dephospho-CoA kinase, found in Rickettsia prowazekii (strain Madrid E).